Reading from the N-terminus, the 359-residue chain is Beta-1,3-galactosyltransferase bre-2 (359 aa).

Topologically, residues 1–11 (MRQSRRASSRV) are cytoplasmic. The helical; Signal-anchor for type II membrane protein transmembrane segment at 12–29 (NRLVVIFIIVASGFLLLY) threads the bilayer. Residues 30–359 (KNTQQFTQID…NPDLEELKEK (330 aa)) are Lumenal-facing. Asn73, Asn163, and Asn209 each carry an N-linked (GlcNAc...) asparagine glycan.

The protein belongs to the glycosyltransferase 31 family.

The protein localises to the golgi apparatus membrane. It participates in protein modification; protein glycosylation. In terms of biological role, transfers N-acetylgalactosamine onto carbohydrate substrates. Involved in susceptibility to pore-forming crystal toxins in conjunction with bre-1, bre-3, bre-4, and bre-5. Involved in resistance to the nematotoxic C.cinerea galectin Cgl2. The protein is Beta-1,3-galactosyltransferase bre-2 of Caenorhabditis elegans.